The sequence spans 288 residues: 4-hydroxy-tetrahydrodipicolinate synthase (288 aa).

Threonine 42 contacts pyruvate. Residue tyrosine 129 is the Proton donor/acceptor of the active site. Lysine 157 acts as the Schiff-base intermediate with substrate in catalysis. Isoleucine 198 provides a ligand contact to pyruvate.

The protein belongs to the DapA family. As to quaternary structure, homotetramer; dimer of dimers.

It is found in the cytoplasm. It catalyses the reaction L-aspartate 4-semialdehyde + pyruvate = (2S,4S)-4-hydroxy-2,3,4,5-tetrahydrodipicolinate + H2O + H(+). The protein operates within amino-acid biosynthesis; L-lysine biosynthesis via DAP pathway; (S)-tetrahydrodipicolinate from L-aspartate: step 3/4. Its function is as follows. Catalyzes the condensation of (S)-aspartate-beta-semialdehyde [(S)-ASA] and pyruvate to 4-hydroxy-tetrahydrodipicolinate (HTPA). The polypeptide is 4-hydroxy-tetrahydrodipicolinate synthase (Chlamydia abortus (strain DSM 27085 / S26/3) (Chlamydophila abortus)).